A 471-amino-acid polypeptide reads, in one-letter code: Ribulose bisphosphate carboxylase large chain (471 aa).

Residues N119 and T169 each contribute to the substrate site. The active-site Proton acceptor is K171. K173 lines the substrate pocket. Residues K197, D199, and E200 each contribute to the Mg(2+) site. K197 carries the N6-carboxylysine modification. The active-site Proton acceptor is H290. Residues R291, H323, and S375 each coordinate substrate.

The protein belongs to the RuBisCO large chain family. Type I subfamily. As to quaternary structure, heterohexadecamer of 8 large chains and 8 small chains; disulfide-linked. The disulfide link is formed within the large subunit homodimers. Requires Mg(2+) as cofactor. The disulfide bond which can form in the large chain dimeric partners within the hexadecamer appears to be associated with oxidative stress and protein turnover.

It is found in the carboxysome. The enzyme catalyses 2 (2R)-3-phosphoglycerate + 2 H(+) = D-ribulose 1,5-bisphosphate + CO2 + H2O. The catalysed reaction is D-ribulose 1,5-bisphosphate + O2 = 2-phosphoglycolate + (2R)-3-phosphoglycerate + 2 H(+). Functionally, ruBisCO catalyzes two reactions: the carboxylation of D-ribulose 1,5-bisphosphate, the primary event in carbon dioxide fixation, as well as the oxidative fragmentation of the pentose substrate in the photorespiration process. Both reactions occur simultaneously and in competition at the same active site. In Microcystis aeruginosa (strain NIES-843 / IAM M-2473), this protein is Ribulose bisphosphate carboxylase large chain.